We begin with the raw amino-acid sequence, 316 residues long: Acetyl-coenzyme A carboxylase carboxyl transferase subunit alpha (316 aa).

The 255-residue stretch at 39 to 293 folds into the CoA carboxyltransferase C-terminal domain; it reads RLQDKSESLT…REQLNSQLHM (255 aa).

The protein belongs to the AccA family. In terms of assembly, acetyl-CoA carboxylase is a heterohexamer composed of biotin carboxyl carrier protein (AccB), biotin carboxylase (AccC) and two subunits each of ACCase subunit alpha (AccA) and ACCase subunit beta (AccD).

It is found in the cytoplasm. The catalysed reaction is N(6)-carboxybiotinyl-L-lysyl-[protein] + acetyl-CoA = N(6)-biotinyl-L-lysyl-[protein] + malonyl-CoA. The protein operates within lipid metabolism; malonyl-CoA biosynthesis; malonyl-CoA from acetyl-CoA: step 1/1. Functionally, component of the acetyl coenzyme A carboxylase (ACC) complex. First, biotin carboxylase catalyzes the carboxylation of biotin on its carrier protein (BCCP) and then the CO(2) group is transferred by the carboxyltransferase to acetyl-CoA to form malonyl-CoA. In Stutzerimonas stutzeri (strain A1501) (Pseudomonas stutzeri), this protein is Acetyl-coenzyme A carboxylase carboxyl transferase subunit alpha.